The chain runs to 683 residues: Kinesin-like protein KIF2B (683 aa).

Phosphothreonine; by PLK1 is present on T125. Residues 141-176 (LMTQRKSACLREIEKLQKQRERRRRLHREIRAQRAR) adopt a coiled-coil conformation. At S204 the chain carries Phosphoserine; by PLK1. Residues 213–543 (RICVCVRKRP…LRYANRVKEI (331 aa)) enclose the Kinesin motor domain. 303–310 (GQTGSGKT) provides a ligand contact to ATP. Residues 640–672 (QLLSILEKKIDILTEIRRKLKLLQADIQKENRH) are a coiled coil.

It belongs to the TRAFAC class myosin-kinesin ATPase superfamily. Kinesin family. MCAK/KIF2 subfamily. Phosphorylation at Thr-125 by PLK1 is required for activity in the correction of kinetochore-microtubules attachment errors, while phosphorylation at Ser-204 also by PLK1 is required for the kinetochore localization and activity in prometaphase.

It is found in the cytoplasm. Its subcellular location is the cytoskeleton. It localises to the microtubule organizing center. The protein resides in the centrosome. The protein localises to the spindle. It is found in the chromosome. Its subcellular location is the centromere. It localises to the kinetochore. Plus end-directed microtubule-dependent motor required for spindle assembly and chromosome movement during mitosis. Has microtubule depolymerization activity. Plays a role in chromosome congression. In Bos taurus (Bovine), this protein is Kinesin-like protein KIF2B.